A 118-amino-acid polypeptide reads, in one-letter code: Protein TusC (118 aa).

Belongs to the DsrF/TusC family. In terms of assembly, heterohexamer, formed by a dimer of trimers. The hexameric TusBCD complex contains 2 copies each of TusB, TusC and TusD. The TusBCD complex interacts with TusE.

The protein localises to the cytoplasm. Part of a sulfur-relay system required for 2-thiolation of 5-methylaminomethyl-2-thiouridine (mnm(5)s(2)U) at tRNA wobble positions. This is Protein TusC from Salmonella agona (strain SL483).